Consider the following 601-residue polypeptide: Glutathione-regulated potassium-efflux system protein KefB (601 aa).

13 helical membrane passes run 4 to 24, 29 to 49, 55 to 75, 87 to 107, 111 to 131, 152 to 172, 177 to 197, 207 to 227, 230 to 250, 262 to 282, 284 to 304, 324 to 344, and 356 to 376; these read ADLL…VPLA, IGAV…GLGF, EILH…GLEL, IFGV…GLLM, FLWQ…TAMA, VLLF…LLAG, HFDW…LIGG, FIAA…LVLS, LFMD…GVLL, AIDP…GMSL, LGVL…LVAI, MQFA…FSTA, and ALLL…MKGI. Positions 400-519 constitute an RCK N-terminal domain; it reads KPQVIVVGFG…AGVTQFSRET (120 aa).

This sequence belongs to the monovalent cation:proton antiporter 2 (CPA2) transporter (TC 2.A.37) family. KefB subfamily. As to quaternary structure, interacts with the regulatory subunit KefG.

Its subcellular location is the cell inner membrane. Pore-forming subunit of a potassium efflux system that confers protection against electrophiles. Catalyzes K(+)/H(+) antiport. The sequence is that of Glutathione-regulated potassium-efflux system protein KefB from Salmonella schwarzengrund (strain CVM19633).